A 348-amino-acid polypeptide reads, in one-letter code: Keratocan (348 aa).

A signal peptide spans 1–26 (MSRLNLTMEVLLVAFVAVFLTSQVHS). The region spanning 40–69 (ACPKECNCPPNFPNAVYCDNKGLKSIPVIP) is the LRRNT domain. Cystine bridges form between cysteine 41/cysteine 47 and cysteine 45/cysteine 57. LRR repeat units follow at residues 70 to 92 (PYTWYLYLQNNLIDVLSANALRN), 93 to 118 (ATQLKWINLNRNKITTEGLEVDALRA), 119 to 140 (MSNLVHLYMEDNLLSSIPSPLP), 141 to 163 (AKLEQLRLSRNKISKIPPGVFSG), 165 to 189 (GHLTLLDLQSNKLQDDAVTEVSLKG), 190 to 213 (LNNLIQINLAKNQLNSMPLGLPPT), 215 to 234 (TQIFLDGNNIEKIPAEYFKG), 235 to 260 (LPKVASLRLNRNKLANGGIPKNVFNL), 262 to 280 (SILDLQLSHNQLTEVPVIS), and 281 to 303 (SGLEHLHLDHNKIKSVNSSDICP). The N-linked (GlcNAc...) (keratan sulfate) asparagine glycan is linked to asparagine 92. An N-linked (GlcNAc...) (keratan sulfate) asparagine glycan is attached at asparagine 259. N-linked (GlcNAc...) asparagine glycosylation is present at asparagine 297. A disulfide bond links cysteine 302 and cysteine 339.

This sequence belongs to the small leucine-rich proteoglycan (SLRP) family. SLRP class II subfamily. In terms of processing, glycosylated. Contains keratan sulfate chains. As to expression, expressed in eye, where it is found in the corneal epithelial layer and to a lesser extent in the stromal layer (at protein level).

The protein localises to the secreted. The protein resides in the extracellular space. It localises to the extracellular matrix. In terms of biological role, may be important in developing and maintaining corneal transparency and for the structure of the stromal matrix. The sequence is that of Keratocan from Danio rerio (Zebrafish).